Here is a 345-residue protein sequence, read N- to C-terminus: Phosphoribosylformylglycinamidine cyclo-ligase (345 aa).

This sequence belongs to the AIR synthase family.

The protein localises to the cytoplasm. The enzyme catalyses 2-formamido-N(1)-(5-O-phospho-beta-D-ribosyl)acetamidine + ATP = 5-amino-1-(5-phospho-beta-D-ribosyl)imidazole + ADP + phosphate + H(+). The protein operates within purine metabolism; IMP biosynthesis via de novo pathway; 5-amino-1-(5-phospho-D-ribosyl)imidazole from N(2)-formyl-N(1)-(5-phospho-D-ribosyl)glycinamide: step 2/2. This chain is Phosphoribosylformylglycinamidine cyclo-ligase, found in Enterobacter sp. (strain 638).